A 541-amino-acid polypeptide reads, in one-letter code: Chaperonin GroEL 2 (541 aa).

ATP is bound by residues 29–32 (TLGP), 86–90 (DGTTT), glycine 413, 476–478 (NAA), and aspartate 492.

The protein belongs to the chaperonin (HSP60) family. Forms a cylinder of 14 subunits composed of two heptameric rings stacked back-to-back. Interacts with the co-chaperonin GroES.

The protein localises to the cytoplasm. The catalysed reaction is ATP + H2O + a folded polypeptide = ADP + phosphate + an unfolded polypeptide.. Functionally, together with its co-chaperonin GroES, plays an essential role in assisting protein folding. The GroEL-GroES system forms a nano-cage that allows encapsulation of the non-native substrate proteins and provides a physical environment optimized to promote and accelerate protein folding. This is Chaperonin GroEL 2 from Streptomyces avermitilis (strain ATCC 31267 / DSM 46492 / JCM 5070 / NBRC 14893 / NCIMB 12804 / NRRL 8165 / MA-4680).